Reading from the N-terminus, the 164-residue chain is Large ribosomal subunit protein bL21 (164 aa).

Residues 105 to 164 form a disordered region; the sequence is KAPTIGPRAKKEKKVEAAPADGEAPAKKAPAKKAAAKKAAPKAAAKKAPAKKAAPKAKSE. A compositionally biased stretch (basic residues) spans 133–164; that stretch reads APAKKAAAKKAAPKAAAKKAPAKKAAPKAKSE.

Belongs to the bacterial ribosomal protein bL21 family. Part of the 50S ribosomal subunit. Contacts protein L20.

Its function is as follows. This protein binds to 23S rRNA in the presence of protein L20. The protein is Large ribosomal subunit protein bL21 of Afipia carboxidovorans (strain ATCC 49405 / DSM 1227 / KCTC 32145 / OM5) (Oligotropha carboxidovorans).